Reading from the N-terminus, the 534-residue chain is Prolyl 4-hydroxylase subunit alpha-1 (534 aa).

A signal peptide spans 1–17 (MIWVVLMMAILLPQSLA). N-linked (GlcNAc...) asparagine glycosylation occurs at Asn113. Residues 205-238 (VSVLDYLSYAVYQQGDLDKALLLTKKLLELDPEH) form a TPR repeat. Residue Asn259 is glycosylated (N-linked (GlcNAc...) asparagine). A Fe2OG dioxygenase domain is found at 411-519 (TAEELQVANY…KWVSNKWLHE (109 aa)). Residues His429, Asp431, and His500 each coordinate Fe cation. Lys510 is a binding site for 2-oxoglutarate.

The protein belongs to the P4HA family. In terms of assembly, heterotetramer of two alpha-1 chains and two beta chains (P4HB)(the beta chain is the multi-functional PDI), where P4HB plays the role of a structural subunit; this tetramer catalyzes the formation of 4-hydroxyproline in collagen. The cofactor is Fe(2+). L-ascorbate is required as a cofactor. As to expression, expressed at least in brain, heart and lung.

The protein localises to the endoplasmic reticulum lumen. The catalysed reaction is L-prolyl-[collagen] + 2-oxoglutarate + O2 = trans-4-hydroxy-L-prolyl-[collagen] + succinate + CO2. Its activity is regulated as follows. Inhibited by poly(L-proline). Catalyzes the post-translational formation of 4-hydroxyproline in -Xaa-Pro-Gly- sequences in collagens and other proteins. This Mus musculus (Mouse) protein is Prolyl 4-hydroxylase subunit alpha-1 (P4ha1).